Consider the following 351-residue polypeptide: Putative aryl-alcohol dehydrogenase C977.14c (351 aa).

Serine 113 is modified (phosphoserine).

The protein belongs to the aldo/keto reductase family. Aldo/keto reductase 2 subfamily.

It localises to the cytoplasm. It is found in the nucleus. This is Putative aryl-alcohol dehydrogenase C977.14c from Schizosaccharomyces pombe (strain 972 / ATCC 24843) (Fission yeast).